Consider the following 69-residue polypeptide: Ribosome modulation factor (69 aa).

This sequence belongs to the ribosome modulation factor family.

It is found in the cytoplasm. Its function is as follows. During stationary phase, converts 70S ribosomes to an inactive dimeric form (100S ribosomes). This chain is Ribosome modulation factor, found in Hahella chejuensis (strain KCTC 2396).